A 344-amino-acid chain; its full sequence is Arginine N-succinyltransferase (344 aa).

L125 is a binding site for succinyl-CoA. The active-site Proton donor is H229.

It belongs to the arginine N-succinyltransferase family.

It catalyses the reaction succinyl-CoA + L-arginine = N(2)-succinyl-L-arginine + CoA + H(+). Its pathway is amino-acid degradation; L-arginine degradation via AST pathway; L-glutamate and succinate from L-arginine: step 1/5. Catalyzes the transfer of succinyl-CoA to arginine to produce N(2)-succinylarginine. This Escherichia coli (strain 55989 / EAEC) protein is Arginine N-succinyltransferase.